Here is a 132-residue protein sequence, read N- to C-terminus: Small ribosomal subunit protein uS8 (132 aa).

It belongs to the universal ribosomal protein uS8 family. In terms of assembly, part of the 30S ribosomal subunit. Contacts proteins S5 and S12.

In terms of biological role, one of the primary rRNA binding proteins, it binds directly to 16S rRNA central domain where it helps coordinate assembly of the platform of the 30S subunit. In Lactococcus lactis subsp. cremoris (strain MG1363), this protein is Small ribosomal subunit protein uS8.